The chain runs to 257 residues: Adenosylcobinamide-GDP ribazoletransferase (257 aa).

A run of 4 helical transmembrane segments spans residues 28 to 48 (FARSPWTFPVVGYLVGGLVAL), 50 to 70 (LFVPAPAPTVALAFVLAVYAV), 110 to 130 (VALALVVLGLATAALGLVEVA), and 199 to 219 (WPQVLPGLAALLVALATAALV).

This sequence belongs to the CobS family. The cofactor is Mg(2+).

The protein localises to the cell membrane. The enzyme catalyses alpha-ribazole + adenosylcob(III)inamide-GDP = adenosylcob(III)alamin + GMP + H(+). It catalyses the reaction alpha-ribazole 5'-phosphate + adenosylcob(III)inamide-GDP = adenosylcob(III)alamin 5'-phosphate + GMP + H(+). It functions in the pathway cofactor biosynthesis; adenosylcobalamin biosynthesis; adenosylcobalamin from cob(II)yrinate a,c-diamide: step 7/7. In terms of biological role, joins adenosylcobinamide-GDP and alpha-ribazole to generate adenosylcobalamin (Ado-cobalamin). Also synthesizes adenosylcobalamin 5'-phosphate from adenosylcobinamide-GDP and alpha-ribazole 5'-phosphate. This is Adenosylcobinamide-GDP ribazoletransferase from Halorubrum lacusprofundi (strain ATCC 49239 / DSM 5036 / JCM 8891 / ACAM 34).